A 78-amino-acid chain; its full sequence is Dihydrofolate reductase type 2 (78 aa).

NADP(+) is bound by residues Lys32 and 66–69; that span reads VQIY. Ile68 contributes to the substrate binding site.

In terms of assembly, homotetramer.

It carries out the reaction (6S)-5,6,7,8-tetrahydrofolate + NADP(+) = 7,8-dihydrofolate + NADPH + H(+). It participates in cofactor biosynthesis; tetrahydrofolate biosynthesis; 5,6,7,8-tetrahydrofolate from 7,8-dihydrofolate: step 1/1. Functionally, key enzyme in folate metabolism. Catalyzes an essential reaction for de novo glycine and purine synthesis, and for DNA precursor synthesis. This Escherichia coli protein is Dihydrofolate reductase type 2.